A 307-amino-acid chain; its full sequence is Acetaldehyde dehydrogenase 2 (307 aa).

NAD(+) is bound at residue 13–16; that stretch reads SGNI. Cys132 (acyl-thioester intermediate) is an active-site residue. NAD(+) is bound by residues 163–171 and Asn274; that span reads SIGPGTRAN.

The protein belongs to the acetaldehyde dehydrogenase family.

It carries out the reaction acetaldehyde + NAD(+) + CoA = acetyl-CoA + NADH + H(+). This chain is Acetaldehyde dehydrogenase 2, found in Methylibium petroleiphilum (strain ATCC BAA-1232 / LMG 22953 / PM1).